We begin with the raw amino-acid sequence, 132 residues long: Small ribosomal subunit protein uS8 (132 aa).

This sequence belongs to the universal ribosomal protein uS8 family. Part of the 30S ribosomal subunit. Contacts proteins S5 and S12.

In terms of biological role, one of the primary rRNA binding proteins, it binds directly to 16S rRNA central domain where it helps coordinate assembly of the platform of the 30S subunit. This is Small ribosomal subunit protein uS8 from Geobacillus sp. (strain WCH70).